We begin with the raw amino-acid sequence, 867 residues long: DNA endonuclease RBBP8 (867 aa).

The essential for binding to the MRN complex and for RPA focus formation on DNA damage stretch occupies residues 25-48 (ELWSKLKECHDKELQELLLKINKL). Coiled coils occupy residues 38-87 (LQEL…EDRL) and 120-141 (ITELMNDKNALQDENKRLSEQL). Disordered regions lie at residues 141–171 (LHNMQKSRWKSDEENPADTGEGEDGVIPDSP) and 448–486 (RYGKRKNAEAEQEESCESSFDKENNIPIKDIGSERHSML). Positions 154–166 (ENPADTGEGEDGV) are enriched in acidic residues. The PXDLS motif motif lies at 489 to 493 (PLDLS). The damage-recruitment motif stretch occupies residues 508 to 531 (SSRGRTKQTFALVPEKPDPKKPLH). Thr-817 and Thr-829 each carry phosphothreonine. Residues 843 to 867 (SPCQRPRRRQPYNAKFSSKIKEQKT) form a disordered region.

This sequence belongs to the COM1/SAE2/CtIP family. In terms of assembly, homotetramer; formed by antiparallel association of helical extensions protruding from the N-termini of two parallel coiled-coil dimers. Interacts with the MRN complex; the interaction links DNA sensing to resection. Interacts with samhd1. Post-translationally, phosphorylation at Thr-817 and Thr-829 promote interaction with nbn and recruitment to double-strand breaks (DSBs).

It is found in the nucleus. Its subcellular location is the chromosome. Functionally, endonuclease that cooperates with the MRE11-RAD50-NBN (MRN) complex in DNA-end resection, the first step of double-strand break (DSB) repair through the homologous recombination (HR) pathway. Functions downstream of the MRN complex and ATM, promotes ATR activation and its recruitment to DSBs in the S/G2 phase facilitating the generation of ssDNA. Specifically promotes the endonuclease activity of the MRN complex to clear DNA ends containing protein adducts: recruited to DSBs by nbn following phosphorylation, and promotes the endonuclease of mre11 to clear protein-DNA adducts and generate clean double-strand break ends. The sequence is that of DNA endonuclease RBBP8 (rbbp8) from Xenopus tropicalis (Western clawed frog).